Reading from the N-terminus, the 112-residue chain is uncharacterized protein (112 aa).

A run of 2 helical transmembrane segments spans residues 33 to 53 (IIGILLHSGPIAGFSINMIIF) and 69 to 89 (MNNIISYSYIYIYIYICHITV).

The protein resides in the membrane. This is an uncharacterized protein from Saccharomyces cerevisiae (strain ATCC 204508 / S288c) (Baker's yeast).